Reading from the N-terminus, the 364-residue chain is ERCC4 domain-containing protein EP364R (364 aa).

The ERCC4 domain occupies 3-102 (FLVADHREHH…QLYFFVEGPA (100 aa)). Positions 319-328 (ASRPATQPAA) are enriched in polar residues. Residues 319-352 (ASRPATQPAATQPLHEVSDDATSNASDTSSPIGH) form a disordered region. Low complexity predominate over residues 338–348 (DATSNASDTSS).

Belongs to the asfivirus EP364R family.

Plays a role in the inhibition of type I interferon signaling pathway. Mechanistically, specifically interacts with 2',3'-cGAMP and cleaves it via its phosphodiesterase activity. In turn, prevents 2',3'-cGAMP interaction with host ER-resident STING1 leading to inhibition of downstream signaling pathway and type I interferon production. The sequence is that of ERCC4 domain-containing protein EP364R from African swine fever virus (strain Badajoz 1971 Vero-adapted) (Ba71V).